The following is a 64-amino-acid chain: Temporin-ALh (64 aa).

A signal peptide spans 1 to 22 (MFPLKKSLLLLFFLATINLSLC). Residues 23-46 (EQERNAEEERRDEPDERNAEVEKR) constitute a propeptide that is removed on maturation. At serine 62 the chain carries Serine amide.

It belongs to the frog skin active peptide (FSAP) family. Temporin subfamily. As to expression, expressed by the skin glands.

The protein localises to the secreted. In terms of biological role, antimicrobial peptide with activity against Gram-positive and Gram-negative bacteria and against fungi. Has been tested against S.aureus (MIC=2.5 ug/mL), B.pumilus (MIC=7.5 ug/mL), B.cereus (MIC=75.0 ug/mL), E.coli (MIC=5.0 ug/mL), B.dysenteriae (MIC=20.0 ug/mL), A.cacoaceticus (MIC=60.0 ug/mL), P.aeruginosa (MIC=2.5 ug/mL) and C.albicans (MIC=2.5 ug/mL). Also shows a weak hemolytic activity. This Amolops loloensis (Lolokou Sucker Frog) protein is Temporin-ALh.